Consider the following 876-residue polypeptide: Phosphoenolpyruvate carboxylase (876 aa).

Active-site residues include His138 and Lys543.

Belongs to the PEPCase type 1 family. It depends on Mg(2+) as a cofactor.

It carries out the reaction oxaloacetate + phosphate = phosphoenolpyruvate + hydrogencarbonate. Its function is as follows. Forms oxaloacetate, a four-carbon dicarboxylic acid source for the tricarboxylic acid cycle. The sequence is that of Phosphoenolpyruvate carboxylase from Pseudomonas fluorescens (strain Pf0-1).